The chain runs to 314 residues: Malate dehydrogenase (314 aa).

NAD(+)-binding positions include 11–16 (GSGNIG) and aspartate 35. Positions 84 and 90 each coordinate substrate. NAD(+) contacts are provided by residues asparagine 97 and 120-122 (ITN). Positions 122 and 153 each coordinate substrate. Catalysis depends on histidine 177, which acts as the Proton acceptor.

It belongs to the LDH/MDH superfamily. MDH type 3 family.

It catalyses the reaction (S)-malate + NAD(+) = oxaloacetate + NADH + H(+). Its function is as follows. Catalyzes the reversible oxidation of malate to oxaloacetate. This chain is Malate dehydrogenase, found in Rickettsia canadensis (strain McKiel).